The chain runs to 481 residues: Glutamate--glyoxylate aminotransferase 2 (481 aa).

K291 is modified (N6-(pyridoxal phosphate)lysine). A Peroxisomal targeting signal motif is present at residues 479-481; sequence SRM.

This sequence belongs to the class-I pyridoxal-phosphate-dependent aminotransferase family. Alanine aminotransferase subfamily. Homodimer. Requires pyridoxal 5'-phosphate as cofactor. Post-translationally, the N-terminus is blocked. As to expression, expressed at low levels in seedlings, leaves, flowers, roots, and green siliques.

It localises to the peroxisome. It carries out the reaction L-alanine + 2-oxoglutarate = pyruvate + L-glutamate. It catalyses the reaction glyoxylate + L-alanine = glycine + pyruvate. The enzyme catalyses glycine + 2-oxoglutarate = glyoxylate + L-glutamate. Its pathway is photosynthesis; C4 acid pathway. It participates in amino-acid degradation; L-alanine degradation via transaminase pathway; pyruvate from L-alanine: step 1/1. Catalyzes the Glu:glyoxylate aminotransferase (GGT), Ala:glyoxylate aminotransferase (AGT), Ala:2-oxoglutarate aminotransferase (AKT) and Glu:pyruvate aminotransferase (GPT) reactions in peroxisomes. This chain is Glutamate--glyoxylate aminotransferase 2 (GGAT2), found in Arabidopsis thaliana (Mouse-ear cress).